The following is a 268-amino-acid chain: Sterol uptake protein 2 (268 aa).

It belongs to the SUT1 family.

It is found in the nucleus. In terms of biological role, putative transcription factor involved in the regulation of the activity of the cAMP/protein kinase A pathway. Involved in sterol uptake. With SUT1, positively regulates mating by repressing the expression of the mating inhibitors NCE102, PRR2 and RHO5 in response to pheromone. The protein is Sterol uptake protein 2 of Saccharomyces cerevisiae (strain ATCC 204508 / S288c) (Baker's yeast).